Reading from the N-terminus, the 355-residue chain is MAKLLALTLVGLVLALYKNHRSSYQTRLNAFREVTPVELPNCNLVKGIETGAEDLEILPNGLTFFSTGLKYPGIKSFDPSKPGKILLMDLNKKEPAVSELEIIGNTLDISSFNPHGISTFTDEDNTVYLLVVNHPDSSSTVEVFKFQEEERSLLHLKTITHELLPSINDIAAIGPESFYATNDHYFADPYLRSWEMYLGLSWSNVVYYSPDKVQVVAEGFDFANGIGISLDGKYVYIAELLAHKIHVYEKHANWTLTPLKVLNFDTLVDNISVDPVTGDLWVGCHPNGMRIFFYDAENPPGSEVLRIQNILSEDPKITVVYAENGTVLQGTTVASVYKGKLLIGTVFHKALYCDL.

Cysteines 42 and 353 form a disulfide. Ca(2+) contacts are provided by E53 and D54. The active-site Proton acceptor is H115. Positions 117, 168, 169, and 224 each coordinate Ca(2+). N253 carries an N-linked (GlcNAc...) asparagine glycan. Ca(2+) is bound by residues D269 and N270. Residues N270 and N324 are each glycosylated (N-linked (GlcNAc...) asparagine).

It belongs to the paraoxonase family. In terms of assembly, homodimer. Interacts with CLU. The cofactor is Ca(2+). In terms of processing, the signal sequence is not cleaved. As to expression, plasma, liver, kidney, heart, brain, small intestine and lung. In the plasma, associated with HDL.

The protein localises to the secreted. The protein resides in the extracellular space. It carries out the reaction a phenyl acetate + H2O = a phenol + acetate + H(+). The catalysed reaction is An aryl dialkyl phosphate + H2O = dialkyl phosphate + an aryl alcohol.. The enzyme catalyses an N-acyl-L-homoserine lactone + H2O = an N-acyl-L-homoserine + H(+). Functionally, hydrolyzes the toxic metabolites of a variety of organophosphorus insecticides. Capable of hydrolyzing a broad spectrum of organophosphate substrates and lactones, and a number of aromatic carboxylic acid esters. Mediates an enzymatic protection of low density lipoproteins against oxidative modification. The chain is Serum paraoxonase/arylesterase 1 (Pon1) from Mus musculus (Mouse).